A 285-amino-acid chain; its full sequence is Protoheme IX farnesyltransferase (285 aa).

9 consecutive transmembrane segments (helical) span residues 8 to 28 (ITKP…FLFA), 36 to 56 (YVLF…ACVF), 80 to 100 (LLPV…GLSI), 107 to 127 (FISM…YTMF), 133 to 153 (FYST…GYTA), 163 to 183 (ILLF…ISIM), 209 to 229 (IFFY…LGYL), 232 to 252 (NFLL…YSNI), and 265 to 285 (FYFS…DVFF).

Belongs to the UbiA prenyltransferase family. Protoheme IX farnesyltransferase subfamily.

The protein localises to the cell membrane. The catalysed reaction is heme b + (2E,6E)-farnesyl diphosphate + H2O = Fe(II)-heme o + diphosphate. It functions in the pathway porphyrin-containing compound metabolism; heme O biosynthesis; heme O from protoheme: step 1/1. In terms of biological role, converts heme B (protoheme IX) to heme O by substitution of the vinyl group on carbon 2 of heme B porphyrin ring with a hydroxyethyl farnesyl side group. This chain is Protoheme IX farnesyltransferase, found in Buchnera aphidicola subsp. Acyrthosiphon pisum (strain Tuc7).